The following is a 196-amino-acid chain: GTP cyclohydrolase-2 (196 aa).

Position 49–53 (Arg-49–Glu-53) interacts with GTP. 3 residues coordinate Zn(2+): Cys-54, Cys-65, and Cys-67. Residues Gln-70, Glu-92–Arg-94, and Thr-114 each bind GTP. The active-site Proton acceptor is the Asp-126. Arg-128 (nucleophile) is an active-site residue. 2 residues coordinate GTP: Thr-149 and Lys-154.

This sequence belongs to the GTP cyclohydrolase II family. Homodimer. It depends on Zn(2+) as a cofactor.

The catalysed reaction is GTP + 4 H2O = 2,5-diamino-6-hydroxy-4-(5-phosphoribosylamino)-pyrimidine + formate + 2 phosphate + 3 H(+). Its pathway is cofactor biosynthesis; riboflavin biosynthesis; 5-amino-6-(D-ribitylamino)uracil from GTP: step 1/4. Functionally, catalyzes the conversion of GTP to 2,5-diamino-6-ribosylamino-4(3H)-pyrimidinone 5'-phosphate (DARP), formate and pyrophosphate. The sequence is that of GTP cyclohydrolase-2 from Enterobacter sp. (strain 638).